The chain runs to 1631 residues: ABC transporter A family member 6 (1631 aa).

Helical transmembrane passes span 25 to 45 (ICCE…ILAL), 242 to 262 (SVFI…DVVI), 285 to 305 (SWII…VVIF), 317 to 337 (GIVI…SFIF), 346 to 366 (FCGL…IFVS), 372 to 392 (VSVK…SIYI), and 416 to 436 (ILML…FEKV). Positions 491-724 (ISIRNLRKEF…FGQGYLLTCN (234 aa)) constitute an ABC transporter 1 domain. ATP is bound at residue 527–534 (GPNGCGKS). 7 helical membrane-spanning segments follow: residues 866-886 (SFFL…ILYK), 1047-1067 (AIIY…GSFA), 1099-1119 (WDFF…AGVI), 1127-1147 (FGSF…LGYL), 1158-1178 (AVGA…IASL), 1198-1218 (IIDL…IVFI), and 1242-1262 (LGTP…WILL). The ABC transporter 2 domain occupies 1309–1544 (IQFKNLHKLF…FGAGYSIDVK (236 aa)). Residue 1347 to 1354 (GLNGGGKS) coordinates ATP.

Belongs to the ABC transporter superfamily. ABCA family.

It localises to the membrane. The sequence is that of ABC transporter A family member 6 (abcA6) from Dictyostelium discoideum (Social amoeba).